A 235-amino-acid polypeptide reads, in one-letter code: Transmembrane protein 215 (235 aa).

2 consecutive transmembrane segments (helical) span residues 12 to 32 and 40 to 60; these read LVVA…VSGM and IPLL…IALA. A disordered region spans residues 99-146; it reads SDLESGKGSSDELAKKAGLRGKQLPQGPGEVPMASSVTTPTPTEEGEC.

It localises to the membrane. In Mus musculus (Mouse), this protein is Transmembrane protein 215 (Tmem215).